Here is a 766-residue protein sequence, read N- to C-terminus: Protein translocase subunit SecA 2 (766 aa).

ATP is bound by residues glutamine 84, 102–106 (GEGKT), and aspartate 490.

It belongs to the SecA family. Monomer and homodimer. Part of the essential Sec protein translocation apparatus which comprises SecA, SecYEG and auxiliary proteins SecDF. Other proteins may also be involved.

The protein localises to the cell membrane. It is found in the cytoplasm. It carries out the reaction ATP + H2O + cellular proteinSide 1 = ADP + phosphate + cellular proteinSide 2.. In terms of biological role, part of the Sec protein translocase complex. Interacts with the SecYEG preprotein conducting channel. Has a central role in coupling the hydrolysis of ATP to the transfer of proteins into and across the cell membrane, serving as an ATP-driven molecular motor driving the stepwise translocation of polypeptide chains across the membrane. The sequence is that of Protein translocase subunit SecA 2 from Thermobifida fusca (strain YX).